Consider the following 636-residue polypeptide: Chaperone protein HtpG (636 aa).

Residues 1–345 form an a; substrate-binding region; that stretch reads MSESATANAN…SSDLPLNVSR (345 aa). Positions 346–562 are b; the sequence is EILQQSKDID…EHDPSGNLAR (217 aa). The c stretch occupies residues 563-636; that stretch reads LMKAAGQPMP…NDLMMALSAK (74 aa).

Belongs to the heat shock protein 90 family. Homodimer.

Its subcellular location is the cytoplasm. Functionally, molecular chaperone. Has ATPase activity. The protein is Chaperone protein HtpG of Dechloromonas aromatica (strain RCB).